Here is a 206-residue protein sequence, read N- to C-terminus: Small ribosomal subunit protein uS4 (206 aa).

One can recognise an S4 RNA-binding domain in the interval 96 to 156 (CRLDNVVYRM…EKAKNQLRIV (61 aa)).

Belongs to the universal ribosomal protein uS4 family. In terms of assembly, part of the 30S ribosomal subunit. Contacts protein S5. The interaction surface between S4 and S5 is involved in control of translational fidelity.

Its function is as follows. One of the primary rRNA binding proteins, it binds directly to 16S rRNA where it nucleates assembly of the body of the 30S subunit. With S5 and S12 plays an important role in translational accuracy. The chain is Small ribosomal subunit protein uS4 from Pseudomonas fluorescens (strain ATCC BAA-477 / NRRL B-23932 / Pf-5).